Consider the following 162-residue polypeptide: Nucleotide-binding protein SAV_4896 (162 aa).

The protein belongs to the YajQ family.

Its function is as follows. Nucleotide-binding protein. This is Nucleotide-binding protein SAV_4896 from Streptomyces avermitilis (strain ATCC 31267 / DSM 46492 / JCM 5070 / NBRC 14893 / NCIMB 12804 / NRRL 8165 / MA-4680).